The sequence spans 481 residues: Cobyric acid synthase (481 aa).

Positions Ala-248–Phe-435 constitute a GATase cobBQ-type domain. Cys-330 functions as the Nucleophile in the catalytic mechanism. His-427 is an active-site residue.

Belongs to the CobB/CobQ family. CobQ subfamily.

The protein operates within cofactor biosynthesis; adenosylcobalamin biosynthesis. Catalyzes amidations at positions B, D, E, and G on adenosylcobyrinic A,C-diamide. NH(2) groups are provided by glutamine, and one molecule of ATP is hydrogenolyzed for each amidation. The polypeptide is Cobyric acid synthase (Cereibacter sphaeroides (strain ATCC 17025 / ATH 2.4.3) (Rhodobacter sphaeroides)).